A 314-amino-acid chain; its full sequence is 2,3-dihydroxyphenylpropionate/2,3-dihydroxicinnamic acid 1,2-dioxygenase (314 aa).

Residue histidine 115 is the Proton donor of the active site. Catalysis depends on histidine 179, which acts as the Proton acceptor.

It belongs to the LigB/MhpB extradiol dioxygenase family. As to quaternary structure, homotetramer. Requires Fe(2+) as cofactor.

The catalysed reaction is 3-(2,3-dihydroxyphenyl)propanoate + O2 = (2Z,4E)-2-hydroxy-6-oxonona-2,4-dienedioate + H(+). It catalyses the reaction (2E)-3-(2,3-dihydroxyphenyl)prop-2-enoate + O2 = (2Z,4E,7E)-2-hydroxy-6-oxonona-2,4,7-trienedioate + H(+). Its pathway is aromatic compound metabolism; 3-phenylpropanoate degradation. Catalyzes the non-heme iron(II)-dependent oxidative cleavage of 2,3-dihydroxyphenylpropionic acid and 2,3-dihydroxicinnamic acid into 2-hydroxy-6-ketononadienedioate and 2-hydroxy-6-ketononatrienedioate, respectively. The chain is 2,3-dihydroxyphenylpropionate/2,3-dihydroxicinnamic acid 1,2-dioxygenase from Klebsiella pneumoniae (strain 342).